Here is a 254-residue protein sequence, read N- to C-terminus: O-antigen biosynthesis glycosyltransferase WbnJ (254 aa).

It belongs to the glycosyltransferase 2 family.

It carries out the reaction an N-acetyl-alpha-D-galactosaminyl derivative + UDP-alpha-D-galactose = a beta-D-galactosyl-(1-&gt;3)-N-acetyl-alpha-D-galactosaminyl derivative + UDP + H(+). The catalysed reaction is alpha-D-GalNAc-(1-&gt;3)-alpha-D-GalNAc-di-trans,octa-cis-undecaprenyl diphosphate + UDP-alpha-D-galactose = beta-D-Gal-(1-&gt;3)-alpha-D-GalNAc-(1-&gt;3)-alpha-D-GalNAc-di-trans,octa-cis-undecaprenyl diphosphate + UDP + H(+). Its pathway is bacterial outer membrane biogenesis; LPS O-antigen biosynthesis. In terms of biological role, involved in the assembly of the O-repeating unit during O-antigen biosynthesis. The chain is O-antigen biosynthesis glycosyltransferase WbnJ from Escherichia coli.